We begin with the raw amino-acid sequence, 293 residues long: Elongation factor Ts (293 aa).

The involved in Mg(2+) ion dislocation from EF-Tu stretch occupies residues 81–84 (TDFV).

It belongs to the EF-Ts family.

The protein localises to the cytoplasm. In terms of biological role, associates with the EF-Tu.GDP complex and induces the exchange of GDP to GTP. It remains bound to the aminoacyl-tRNA.EF-Tu.GTP complex up to the GTP hydrolysis stage on the ribosome. The polypeptide is Elongation factor Ts (Methylococcus capsulatus (strain ATCC 33009 / NCIMB 11132 / Bath)).